Consider the following 414-residue polypeptide: MNYIIKFLNKLNNLTVAIIILLAIALASALGTVIEQNKNTDFYLKNYPLTKPLFNFVTSDLILKFGLDHVYTSWWFIFLIILLLLSLTLCTITRQLPALKLARLWQFYTNFNTKAKFQIRFKTNSSSLTKLTYYLEEKNYKIKHFNHFVYAYKGIFGRVSPIIVHFSLVIVLIGSMLSTTQGRTQEAFIVVNQEKPVLDTYEAYVNDFKIAYNSQGLIDQFYSDLILETRQASKIQKTIYVNEPLNYSNITIYQTDWNIDNLVICIDNQNYYSIPLQFIELPNGSESKYWINRLDLFGQSVFCVVNDLTGIVYLYNQNKDLICISSLGEFITLNGHTITFNKLVASTGLQFKLDSFIPLVYLGFLLLMISTLLSYISYSQVWLVKNGSTTYIFGSTNRAKFAFIKQLTEIANQC.

3 helical membrane-spanning segments follow: residues 14–34, 73–93, and 159–179; these read LTVA…GTVI, SWWF…CTIT, and VSPI…MLST.

Belongs to the Ccs1/CcsB family. May interact with CcsA.

The protein resides in the plastid. It is found in the chloroplast thylakoid membrane. Required during biogenesis of c-type cytochromes (cytochrome c6 and cytochrome f) at the step of heme attachment. The sequence is that of Cytochrome c biogenesis protein Ccs1 from Guillardia theta (Cryptophyte).